Here is a 212-residue protein sequence, read N- to C-terminus: MLPFLRDPAACLVPVILTALLLLAIGYLLGSTPSGYLAGRWLKGIDLRDCGSGSTGATNVLRNVGKGPALVVFLIDVGKGALAVLLAKTFGLSDWLQVLAGLAALAGHIWPVWLGWKGGKAVATGFGMFLGLAWPVGLACFGLFMAVISIFRIVSLSSVVAAIGLPLLMVVSGGSSAYVVVSLVASLMVLWRHRSNIERLIAGTEPKIGQKA.

Transmembrane regions (helical) follow at residues 9–29, 67–87, 95–115, 128–148, and 168–190; these read AACLVPVILTALLLLAIGYLL, GPALVVFLIDVGKGALAVLLA, WLQVLAGLAALAGHIWPVWLG, MFLGLAWPVGLACFGLFMAVI, and LMVVSGGSSAYVVVSLVASLMVL.

This sequence belongs to the PlsY family. In terms of assembly, probably interacts with PlsX.

The protein resides in the cell inner membrane. The catalysed reaction is an acyl phosphate + sn-glycerol 3-phosphate = a 1-acyl-sn-glycero-3-phosphate + phosphate. The protein operates within lipid metabolism; phospholipid metabolism. In terms of biological role, catalyzes the transfer of an acyl group from acyl-phosphate (acyl-PO(4)) to glycerol-3-phosphate (G3P) to form lysophosphatidic acid (LPA). This enzyme utilizes acyl-phosphate as fatty acyl donor, but not acyl-CoA or acyl-ACP. This Parasynechococcus marenigrum (strain WH8102) protein is Glycerol-3-phosphate acyltransferase.